Consider the following 234-residue polypeptide: NAD-dependent protein deacylase (234 aa).

The 234-residue stretch at 1–234 (MTKQVRIVVL…LVPHYLAQFL (234 aa)) folds into the Deacetylase sirtuin-type domain. 12 to 31 (GAGISAESGIRTFRATDGLW) contacts NAD(+). Residues Y56 and R59 each contribute to the substrate site. 93 to 96 (QNVD) is a binding site for NAD(+). Catalysis depends on H111, which acts as the Proton acceptor. Residues C119 and C138 each contribute to the Zn(2+) site. NAD(+) contacts are provided by residues 178–180 (GTS), 204–206 (NLE), and A222.

The protein belongs to the sirtuin family. Class III subfamily. Requires Zn(2+) as cofactor.

The protein localises to the cytoplasm. The enzyme catalyses N(6)-acetyl-L-lysyl-[protein] + NAD(+) + H2O = 2''-O-acetyl-ADP-D-ribose + nicotinamide + L-lysyl-[protein]. It carries out the reaction N(6)-succinyl-L-lysyl-[protein] + NAD(+) + H2O = 2''-O-succinyl-ADP-D-ribose + nicotinamide + L-lysyl-[protein]. In terms of biological role, NAD-dependent lysine deacetylase and desuccinylase that specifically removes acetyl and succinyl groups on target proteins. Modulates the activities of several proteins which are inactive in their acylated form. This chain is NAD-dependent protein deacylase, found in Pasteurella multocida (strain Pm70).